Reading from the N-terminus, the 60-residue chain is Large ribosomal subunit protein bL32 (60 aa).

The span at 1–16 (MAVPKRKTSPSKRGMR) shows a compositional bias: basic residues. Residues 1-60 (MAVPKRKTSPSKRGMRRSADALKAPTYVEDKNSGELRRPHHVDLKTGMYRGRQVLEPKEA) form a disordered region. The segment covering 28–44 (VEDKNSGELRRPHHVDL) has biased composition (basic and acidic residues).

Belongs to the bacterial ribosomal protein bL32 family.

The sequence is that of Large ribosomal subunit protein bL32 from Chelativorans sp. (strain BNC1).